The chain runs to 682 residues: Potassium-transporting ATPase ATP-binding subunit (682 aa).

A run of 4 helical transmembrane segments spans residues 35 to 55 (VMFI…AMAG), 62 to 82 (ATFT…ANFA), 219 to 239 (IALT…TATI), and 254 to 274 (VLVA…LSAI). Catalysis depends on aspartate 307, which acts as the 4-aspartylphosphate intermediate. Residues aspartate 344, glutamate 348, 377–384 (FTAQTRMS), and lysine 395 contribute to the ATP site. Mg(2+)-binding residues include aspartate 518 and aspartate 522. 3 consecutive transmembrane segments (helical) span residues 588 to 608 (FAII…LNVM), 616 to 636 (AILS…PLAL), and 656 to 676 (IYGL…DLLL).

The protein belongs to the cation transport ATPase (P-type) (TC 3.A.3) family. Type IA subfamily. The system is composed of three essential subunits: KdpA, KdpB and KdpC.

It is found in the cell inner membrane. It catalyses the reaction K(+)(out) + ATP + H2O = K(+)(in) + ADP + phosphate + H(+). Functionally, part of the high-affinity ATP-driven potassium transport (or Kdp) system, which catalyzes the hydrolysis of ATP coupled with the electrogenic transport of potassium into the cytoplasm. This subunit is responsible for energy coupling to the transport system and for the release of the potassium ions to the cytoplasm. This chain is Potassium-transporting ATPase ATP-binding subunit, found in Klebsiella pneumoniae (strain 342).